The sequence spans 459 residues: uncharacterized protein (459 aa).

2 helical membrane-spanning segments follow: residues 53 to 75 (IPLL…GLTL) and 111 to 133 (ARIA…CLCA). The segment at 174–196 (HLDNPSAPHPSENPQSRAHPKQN) is disordered.

It is found in the cell membrane. This is an uncharacterized protein from Treponema pallidum (strain Nichols).